A 451-amino-acid chain; its full sequence is Probable gamma-glutamyl phosphate reductase (451 aa).

It belongs to the gamma-glutamyl phosphate reductase family.

It carries out the reaction L-glutamate 5-semialdehyde + phosphate + NADP(+) = L-glutamyl 5-phosphate + NADPH + H(+). The protein operates within amino-acid biosynthesis; L-proline biosynthesis; L-glutamate 5-semialdehyde from L-glutamate: step 2/2. Functionally, catalyzes the NADPH dependent reduction of L-gamma-glutamyl 5-phosphate into L-glutamate 5-semialdehyde and phosphate. The product spontaneously undergoes cyclization to form 1-pyrroline-5-carboxylate. The chain is Probable gamma-glutamyl phosphate reductase (pro1) from Schizosaccharomyces pombe (strain 972 / ATCC 24843) (Fission yeast).